A 452-amino-acid chain; its full sequence is uncharacterized protein (452 aa).

This is an uncharacterized protein from Chlamydia pneumoniae (Chlamydophila pneumoniae).